The following is a 200-amino-acid chain: Protein GrpE (200 aa).

It belongs to the GrpE family. Homodimer.

It localises to the cytoplasm. Functionally, participates actively in the response to hyperosmotic and heat shock by preventing the aggregation of stress-denatured proteins, in association with DnaK and GrpE. It is the nucleotide exchange factor for DnaK and may function as a thermosensor. Unfolded proteins bind initially to DnaJ; upon interaction with the DnaJ-bound protein, DnaK hydrolyzes its bound ATP, resulting in the formation of a stable complex. GrpE releases ADP from DnaK; ATP binding to DnaK triggers the release of the substrate protein, thus completing the reaction cycle. Several rounds of ATP-dependent interactions between DnaJ, DnaK and GrpE are required for fully efficient folding. The polypeptide is Protein GrpE (Geobacter sulfurreducens (strain ATCC 51573 / DSM 12127 / PCA)).